The chain runs to 423 residues: MTYEKVLKYVQEKKFFETHYNILIAVSGGVDSMNLLHFLHIYQKKLQIRIAVAHVNHKQRPQADEEEIYLKNWARDNHIPFYTAVFKGIFSEKKARDFRYTFFKNIMKEHGYTALVTAHHANDQAETVFLRLLRGSRLRYLTGIKEIQEFGNGQLIRPFLKFHKKELPNIFHFDDDSNQGDSYLRNRIRNHYLPILTQENPKLSQHLIQMSEETNLLFKAFSDLTSQLDIQDCQIFRSQSEAIQYFLLQNYLRKFPNLEVSKAQFDNLLHILRTKDYYYDYLKNNYYLKKDKKRFKICKIGPETDRFEGEKVLEYGSMVKYGQYIFSFQEGSDSKKGIPVKNDFPIIIRRRKPGDKIKLGSHSKKLRRLFIDEKIPIFKRSNAIIVEQDSDIILILLDGVTYLRKGFKDDIMKGRLYIQNRNW.

27–32 serves as a coordination point for ATP; it reads SGGVDS.

Belongs to the tRNA(Ile)-lysidine synthase family.

It localises to the cytoplasm. It catalyses the reaction cytidine(34) in tRNA(Ile2) + L-lysine + ATP = lysidine(34) in tRNA(Ile2) + AMP + diphosphate + H(+). Its function is as follows. Ligates lysine onto the cytidine present at position 34 of the AUA codon-specific tRNA(Ile) that contains the anticodon CAU, in an ATP-dependent manner. Cytidine is converted to lysidine, thus changing the amino acid specificity of the tRNA from methionine to isoleucine. The polypeptide is tRNA(Ile)-lysidine synthase (Streptococcus mutans serotype c (strain ATCC 700610 / UA159)).